The chain runs to 154 residues: Nuclear cap-binding protein subunit 2 (154 aa).

The disordered stretch occupies residues Met-1–Glu-23. Positions Ser-9–Glu-23 are enriched in basic and acidic residues. MRNA is bound by residues Tyr-10, Tyr-33, Arg-102–Asp-106, Arg-113–Arg-117, and Gln-123–Val-124. The region spanning Thr-30 to Gly-108 is the RRM domain.

This sequence belongs to the RRM NCBP2 family. As to quaternary structure, component of the nuclear cap-binding complex (CBC), a heterodimer composed of Cbp80 and Cbp20 that interacts with m7GpppG-capped RNA. Interacts with Ars2.

Its subcellular location is the nucleus. Its function is as follows. Component of the cap-binding complex (CBC), which binds co-transcriptionally to the 5' cap of pre-mRNAs and is involved in various processes such as pre-mRNA splicing and RNA-mediated gene silencing (RNAi). The CBC complex is involved in miRNA-mediated RNA interference via its interaction with Ars2 and is required for primary microRNAs (miRNAs) processing. Also involved in innate immunity via the short interfering RNAs (siRNAs) processing machinery by restricting the viral RNA production. In the CBC complex, Cbp20 recognizes and binds capped RNAs (m7GpppG-capped RNA) but requires Cbp80 to stabilize the movement of its N-terminal loop and lock the CBC into a high affinity cap-binding state with the cap structure. The chain is Nuclear cap-binding protein subunit 2 (Cbp20) from Drosophila grimshawi (Hawaiian fruit fly).